We begin with the raw amino-acid sequence, 284 residues long: Prestalk D11 protein (284 aa).

The N-terminal stretch at 1 to 25 (MLNKLILLLILSSCLVLSVKSEVNV) is a signal peptide. One copy of the A-1 repeat lies at 25 to 64 (VDCSLVRCAQPICKPHYRLNMTDSCCGRCEPCTDVACTLQ). One copy of the B-1 repeat lies at 65–82 (VKYCQDGEVPTGCCPCTL). Residues 88-126 (DCSLVKCARPVCKPYYRLNMTDSCCGRCEPCTGVACTLQ) form an A-2 repeat. One copy of the B-2 repeat lies at 127-144 (IKYCKDGEVPTGCCPCTP). The stretch at 145–159 (QPTKKPDCSKVPCPK) is one C-1 repeat. The B-3 repeat unit spans residues 161-178 (LKYCQEGELPTGCCPCTP). The C-2 repeat unit spans residues 179–193 (QPTKKPDCSRVPCPK). The B-4 repeat unit spans residues 195 to 212 (LKYCKEGELPTGCCPCTP). Residues 213-228 (QPTKKPDCSDVMCTMD) form a C-3 repeat. Residues 229–246 (IRYCKNGELPTGCCPCTP) form a B-5 repeat. A C-4 repeat occupies 247–262 (QETKVPDCSKAMCTMD). One copy of the B-6 repeat lies at 263 to 278 (IKYCKPGEKPFGCCPC).

The chain is Prestalk D11 protein (ampA) from Dictyostelium discoideum (Social amoeba).